The following is a 332-amino-acid chain: Ribosomal RNA small subunit methyltransferase H (332 aa).

S-adenosyl-L-methionine is bound by residues 34-36 (GGH), Asp59, Phe86, Asp112, and Gln119.

It belongs to the methyltransferase superfamily. RsmH family.

The protein localises to the cytoplasm. The catalysed reaction is cytidine(1402) in 16S rRNA + S-adenosyl-L-methionine = N(4)-methylcytidine(1402) in 16S rRNA + S-adenosyl-L-homocysteine + H(+). Its function is as follows. Specifically methylates the N4 position of cytidine in position 1402 (C1402) of 16S rRNA. In Chlorobium phaeobacteroides (strain BS1), this protein is Ribosomal RNA small subunit methyltransferase H.